The chain runs to 264 residues: Astacin-like metalloprotease toxin 1 (264 aa).

An N-terminal signal peptide occupies residues 1–16 (MIKYIGVFAFLVGGFC). A propeptide spanning residues 17–51 (HDFETVISNQDPIVDGMRLVEGDMLFDDGPLFTER) is cleaved from the precursor. One can recognise a Peptidase M12A domain in the interval 52–249 (NAVKYDQQLW…VKVNKLYKCP (198 aa)). Intrachain disulfides connect Cys-93–Cys-248 and Cys-114–Cys-135. His-143 is a Zn(2+) binding site. Glu-144 is a catalytic residue. His-147 and His-153 together coordinate Zn(2+). Residues Asn-173 and Asn-185 are each glycosylated (N-linked (GlcNAc...) asparagine).

In terms of assembly, monomer. The cofactor is Zn(2+). As to expression, expressed by the venom gland.

The protein resides in the secreted. With respect to regulation, inhibited by 1,10-phenanthroline. Its function is as follows. Zinc metalloprotease. Provoques deadhesion of endothelial cells from cell cultures, and also degradation of fibronectin, fibrinogen and gelatin in vitro. Its role in the venom is not fully understood but it might act as a spreading factor that facilitates diffusion of other venom toxins. Alternatively, it might be involved in the proteolytic processing of other venom toxins or it might play a role in extra-oral digestion of prey. The sequence is that of Astacin-like metalloprotease toxin 1 from Loxosceles intermedia (Brown spider).